Here is a 236-residue protein sequence, read N- to C-terminus: Uridylate kinase (236 aa).

An ATP-binding site is contributed by 12–15 (KISG). Residues 20 to 25 (GTNGYG) are involved in allosteric activation by GTP. Position 54 (G54) interacts with UMP. ATP contacts are provided by G55 and R59. Residues D72 and 133 to 140 (TGNPYFST) each bind UMP. Y166 and D169 together coordinate ATP.

It belongs to the UMP kinase family. Homohexamer.

The protein resides in the cytoplasm. The enzyme catalyses UMP + ATP = UDP + ADP. It functions in the pathway pyrimidine metabolism; CTP biosynthesis via de novo pathway; UDP from UMP (UMPK route): step 1/1. With respect to regulation, allosterically activated by GTP. Inhibited by UTP. Catalyzes the reversible phosphorylation of UMP to UDP. In Clostridium acetobutylicum (strain ATCC 824 / DSM 792 / JCM 1419 / IAM 19013 / LMG 5710 / NBRC 13948 / NRRL B-527 / VKM B-1787 / 2291 / W), this protein is Uridylate kinase.